A 483-amino-acid chain; its full sequence is Glutamyl-tRNA(Gln) amidotransferase subunit A (483 aa).

Residues Lys-76 and Ser-151 each act as charge relay system in the active site. Ser-175 acts as the Acyl-ester intermediate in catalysis.

This sequence belongs to the amidase family. GatA subfamily. As to quaternary structure, heterotrimer of A, B and C subunits.

It carries out the reaction L-glutamyl-tRNA(Gln) + L-glutamine + ATP + H2O = L-glutaminyl-tRNA(Gln) + L-glutamate + ADP + phosphate + H(+). Its function is as follows. Allows the formation of correctly charged Gln-tRNA(Gln) through the transamidation of misacylated Glu-tRNA(Gln) in organisms which lack glutaminyl-tRNA synthetase. The reaction takes place in the presence of glutamine and ATP through an activated gamma-phospho-Glu-tRNA(Gln). This Nitrosococcus oceani (strain ATCC 19707 / BCRC 17464 / JCM 30415 / NCIMB 11848 / C-107) protein is Glutamyl-tRNA(Gln) amidotransferase subunit A.